The following is a 211-amino-acid chain: Small ribosomal subunit protein uS4 (211 aa).

Positions 27–48 (GRKVLERRGSQPPGQHGASVRR) are disordered. The S4 RNA-binding domain occupies 99 to 162 (RRLDNVVFRL…RKRDYFKDLE (64 aa)).

It belongs to the universal ribosomal protein uS4 family. In terms of assembly, part of the 30S ribosomal subunit. Contacts protein S5. The interaction surface between S4 and S5 is involved in control of translational fidelity.

Functionally, one of the primary rRNA binding proteins, it binds directly to 16S rRNA where it nucleates assembly of the body of the 30S subunit. Its function is as follows. With S5 and S12 plays an important role in translational accuracy. This chain is Small ribosomal subunit protein uS4, found in Herpetosiphon aurantiacus (strain ATCC 23779 / DSM 785 / 114-95).